Reading from the N-terminus, the 2876-residue chain is Nipped-B-like protein B (2876 aa).

Composition is skewed to polar residues over residues 124 to 142 and 149 to 167; these read PQNS…TTIT and YVQT…QNSP. Disordered regions lie at residues 124–197, 246–367, 439–494, and 525–1017; these read PQNS…PIQQ, NDEG…SDAE, RESA…AGNK, and EGPV…FPNY. A compositionally biased stretch (pro residues) spans 276-290; sequence GPRPPLILQSPPPYT. The segment covering 439 to 457 has biased composition (basic and acidic residues); sequence RESAIERERCSKEVQDKDK. The segment covering 471 to 480 has biased composition (low complexity); the sequence is PGAAGTAGAS. Over residues 481-490 the composition is skewed to gly residues; the sequence is GTPGVGGGCN. Basic and acidic residues-rich tracts occupy residues 556 to 577, 586 to 955, and 962 to 1005; these read SKTD…KQRV, VDGR…EQRS, and VKQE…HKPQ. Positions 1068–1081 match the PxVxL motif motif; it reads NKGAKPVVVLKKLS. Disordered stretches follow at residues 1088-1229 and 1724-1747; these read MISN…EPKL and TEKA…KDVE. The span at 1090–1100 shows a compositional bias: low complexity; it reads SNSRSSKSSRS. Basic and acidic residues-rich tracts occupy residues 1104-1119 and 1156-1183; these read RFRE…ERVK and KDRD…DSRR. Positions 1212–1223 are enriched in basic residues; the sequence is KLKKKEKQKKRK. HEAT repeat units lie at residues 1803–1841, 1879–1917, 1981–2020, 2203–2241, and 2349–2387; these read AQSF…VDPS, PQLT…EQPT, YDWF…HILK, VVIK…QDPG, and LIHP…KYTG. Disordered regions lie at residues 2516–2590 and 2728–2774; these read EVVK…DSDL and ALLG…GHRN. Basic residues predominate over residues 2519 to 2537; it reads KKKKKKKKKKKQKQKRGKK. Residues 2548–2563 show a composition bias toward low complexity; that stretch reads RSSSSSSSSSSSSSDS. Residues 2762-2774 show a composition bias toward basic and acidic residues; it reads RTGDSAEASGHRN.

It belongs to the SCC2/Nipped-B family.

It localises to the nucleus. In terms of biological role, may play a structural role in chromatin. Involved in sister chromatid cohesion, possibly by facilitating the cohesin complex loading. Transcription factor, which may promote cortical neuron migration during brain development by regulating the transcription of crucial genes in this process. The protein is Nipped-B-like protein B (nipblb) of Danio rerio (Zebrafish).